Reading from the N-terminus, the 749-residue chain is cGMP-dependent protein kinase egl-4 (749 aa).

Residues glutamate 30–serine 96 are a coiled coil. Residues leucine 87–glycine 111 form a disordered region. Residues glycine 234–alanine 237, arginine 244–threonine 245, arginine 349, glycine 358–alanine 361, arginine 368–threonine 369, and tyrosine 403 contribute to the 3',5'-cyclic GMP site. Positions valine 438–phenylalanine 698 constitute a Protein kinase domain. Residues leucine 444–valine 452 and lysine 468 contribute to the ATP site. Residues lysine 461–lysine 473 carry the Nuclear localization signal motif. The active-site Proton acceptor is aspartate 562. The 51-residue stretch at methionine 699 to phenylalanine 749 folds into the AGC-kinase C-terminal domain. Residues alanine 723–phenylalanine 749 are disordered.

This sequence belongs to the protein kinase superfamily. AGC Ser/Thr protein kinase family. cGMP subfamily. Requires Mg(2+) as cofactor. Autophosphorylated.

It localises to the cytoplasm. The protein localises to the nucleus. It carries out the reaction L-seryl-[protein] + ATP = O-phospho-L-seryl-[protein] + ADP + H(+). The catalysed reaction is L-threonyl-[protein] + ATP = O-phospho-L-threonyl-[protein] + ADP + H(+). With respect to regulation, binding of cGMP results in enzyme activation. Its function is as follows. Promotes chemoreceptor gene expression in response to increased cGMP levels by antagonizing the gene repression functions of the class II HDAC hda-4 and the mef-2 transcription factor. Regulates gene expression via recruitment of a histone deacetylase complex containing hda-2, saeg-1 and saeg-2. Represses body size and lifespan through the dbl-1 and insulin pathways, respectively. May also signal through daf-3 and/or daf-5. Role in egg-laying, dauer formation and motility. Regulates behavioral responses to various chemosensory stimuli in sensory neurons. Required for the initiation of long term adaptation to prolonged odor exposure which results in a decrease in odor seeking behavior. May regulate this process by phosphorylating tax-2, a subunit of cyclic nucleotide-gated channel tax-2/tax-4. In ASH sensory neurons, negatively regulates avoidance behavior to some bitter tastants, such as quinine, probably by phosphorylating rgs-2 and rgs-3 which are 2 regulator of G-protein signaling proteins. In AWB sensory neurons, involved in avoidance behavior to some repellent odors. In ASE left (ASEL) sensory neuron, involved in the sensing of environmental alkalinity downstream of receptor-type guanylate cyclase gcy-14. In sensory neurons, involved in the signaling pathway downstream of insulin, TGF-beta and receptor-type guanylate cyclase responsible for inducing quiescence after food intake. Might play a role in aversive olfactory learning in AWC neurons when an odor is associated with food deprivation, depending on the ins-1/age-1 signal from the AIA to the AWC neurons. Probably by regulating neuronal transmission downstream of lin-3 and receptor lin-23 and phospholipase plc-3 in ALA neurons, involved in the decrease in locomotion during the quiescent state that precedes each larval molt. This chain is cGMP-dependent protein kinase egl-4, found in Caenorhabditis briggsae.